We begin with the raw amino-acid sequence, 235 residues long: N-alpha-acetyltransferase 10 (235 aa).

Met-1 bears the N-acetylmethionine mark. Residues Met-1–Ala-58 are interaction with NAA15. Residues Met-1–Thr-152 enclose the N-acetyltransferase domain. Position 136 is an N6-acetyllysine; by autocatalysis (Lys-136). The disordered stretch occupies residues Asn-178–Ser-235. Phosphoserine occurs at positions 182, 186, and 205. Over residues Ala-193–Ser-213 the composition is skewed to basic and acidic residues. Position 209 is a phosphoserine; by IKKB (Ser-209). Phosphoserine occurs at positions 213 and 216.

It belongs to the acetyltransferase family. ARD1 subfamily. As to quaternary structure, component of the N-terminal acetyltransferase A complex (also called the NatA complex) composed of NAA10 and NAA15. Within the complex interacts with NAA15. Component of the N-terminal acetyltransferase A (NatA)/HYPK complex at least composed of NAA10, NAA15 and HYPK, which has N-terminal acetyltransferase activity. In complex with NAA15, interacts with HYPK. Component of the N-terminal acetyltransferase E (NatE) complex at least composed of NAA10, NAA15 and NAA50. Within the complex interacts with NAA15; the interaction is required for binding to NAAT50. Interacts with NAAT50. The interaction of the NatA complex with NAA50 reduces the acetylation activity of the NatA complex. Component of the N-terminal acetyltransferase E (NatE)/HYPK complex at least composed of NAA10, NAA15, NAA50 and HYPK. In complex with NAA15, interacts with HYPK; the interaction with HYPK reduces the capacity of the NatA complex to interact with NAA50. Interacts with HIF1A (via its ODD domain); the interaction increases HIF1A protein stability during normoxia, an down-regulates it when induced by hypoxia. Interacts with the ribosome. Binds to MYLK. Interacts with NAA16. Interacts (via its C-terminal domain) with TSC2, leading to its acetylation. Interacts with IKBKB. Interacts with HSPA1A and HSPA1B leading to its acetylation. Post-translationally, cleaved by caspases during apoptosis. Phosphorylation by IKBKB/IKKB at Ser-209 promotes its proteasome-mediated degradation. In terms of processing, autoacetylated at Lys-136 which stimulates its catalytic activity. Ubiquitous.

Its subcellular location is the cytoplasm. The protein localises to the nucleus. The catalysed reaction is N-terminal glycyl-[protein] + acetyl-CoA = N-terminal N(alpha)-acetylglycyl-[protein] + CoA + H(+). It catalyses the reaction N-terminal L-alanyl-[protein] + acetyl-CoA = N-terminal N(alpha)-acetyl-L-alanyl-[protein] + CoA + H(+). The enzyme catalyses N-terminal L-seryl-[protein] + acetyl-CoA = N-terminal N(alpha)-acetyl-L-seryl-[protein] + CoA + H(+). It carries out the reaction N-terminal L-valyl-[protein] + acetyl-CoA = N-terminal N(alpha)-acetyl-L-valyl-[protein] + CoA + H(+). The catalysed reaction is N-terminal L-cysteinyl-[protein] + acetyl-CoA = N-terminal N(alpha)-acetyl-L-cysteinyl-[protein] + CoA + H(+). It catalyses the reaction N-terminal L-threonyl-[protein] + acetyl-CoA = N-terminal N(alpha)-acetyl-L-threonyl-[protein] + CoA + H(+). In terms of biological role, catalytic subunit of N-terminal acetyltransferase complexes which display alpha (N-terminal) acetyltransferase activity. Acetylates amino termini that are devoid of initiator methionine. The alpha (N-terminal) acetyltransferase activity may be important for vascular, hematopoietic and neuronal growth and development. Without NAA15, displays epsilon (internal) acetyltransferase activity towards HIF1A, thereby promoting its degradation. Represses MYLK kinase activity by acetylation, and thus represses tumor cell migration. Acetylates, and stabilizes TSC2, thereby repressing mTOR activity and suppressing cancer development. Acetylates HSPA1A and HSPA1B at 'Lys-77' which enhances its chaperone activity and leads to preferential binding to co-chaperone HOPX. Acetylates HIST1H4A. Acts as a negative regulator of sister chromatid cohesion during mitosis. The polypeptide is N-alpha-acetyltransferase 10 (NAA10) (Homo sapiens (Human)).